Reading from the N-terminus, the 488-residue chain is Replication-associated protein (488 aa).

The disordered stretch occupies residues 462–488 (PRPRQMQRSATEHNLFQYARSGRDPTS).

It localises to the host nucleus. Functionally, plays an essential for the replication of viral DNA. Presumably cleaves viral genomic dsRNA replicative form to initiate rolling circle replication. The sequence is that of Replication-associated protein from Chaetoceros diatodnavirus 1 (Chaetoceros setoense DNA virus).